The primary structure comprises 214 residues: MDLTALREEYTRHGLTRDDLEDNPFKQFEKWFQQATEAELSEPNAMSLATASAKGEPSIRTVLLKYFDEKGFVFFTNYESRKAQQIEENPHVALLFLWLPLERQVKIQGTATKVSTAESLNYFTSRPRGSQLGAWCSAQSSVISSRKLLEMKFEELKYKFQHGEIPLPSFWGGYRVKPTRFEFWQGRPNRLHDRFSYTLTETDDTTWGIHRLAP.

Substrate is bound by residues 7–10 (REEY) and K65. FMN is bound by residues 60–65 (RTVLLK), 75–76 (FT), R81, K82, and Q104. Substrate-binding residues include Y122, R126, and S130. FMN-binding positions include 139–140 (QS) and W184. Position 190–192 (190–192 (RLH)) interacts with substrate. FMN is bound at residue R194.

This sequence belongs to the pyridoxamine 5'-phosphate oxidase family. In terms of assembly, homodimer. The cofactor is FMN.

It catalyses the reaction pyridoxamine 5'-phosphate + O2 + H2O = pyridoxal 5'-phosphate + H2O2 + NH4(+). The catalysed reaction is pyridoxine 5'-phosphate + O2 = pyridoxal 5'-phosphate + H2O2. Its pathway is cofactor metabolism; pyridoxal 5'-phosphate salvage; pyridoxal 5'-phosphate from pyridoxamine 5'-phosphate: step 1/1. The protein operates within cofactor metabolism; pyridoxal 5'-phosphate salvage; pyridoxal 5'-phosphate from pyridoxine 5'-phosphate: step 1/1. Its function is as follows. Catalyzes the oxidation of either pyridoxine 5'-phosphate (PNP) or pyridoxamine 5'-phosphate (PMP) into pyridoxal 5'-phosphate (PLP). The sequence is that of Pyridoxine/pyridoxamine 5'-phosphate oxidase from Crocosphaera subtropica (strain ATCC 51142 / BH68) (Cyanothece sp. (strain ATCC 51142)).